Consider the following 234-residue polypeptide: Sugar fermentation stimulation protein A (234 aa).

The segment at residues 201–220 is a DNA-binding region (H-T-H motif); sequence LLSEAQNKGVEVLAYKAELS.

Belongs to the SfsA family.

In terms of biological role, binds to DNA non-specifically. Could be a regulatory factor involved in maltose metabolism. The protein is Sugar fermentation stimulation protein A of Salmonella choleraesuis (strain SC-B67).